We begin with the raw amino-acid sequence, 419 residues long: 3-isopropylmalate dehydratase large subunit (419 aa).

[4Fe-4S] cluster contacts are provided by Cys-300, Cys-360, and Cys-363.

The protein belongs to the aconitase/IPM isomerase family. LeuC type 2 subfamily. As to quaternary structure, heterodimer of LeuC and LeuD. [4Fe-4S] cluster serves as cofactor.

It carries out the reaction (2R,3S)-3-isopropylmalate = (2S)-2-isopropylmalate. The protein operates within amino-acid biosynthesis; L-leucine biosynthesis; L-leucine from 3-methyl-2-oxobutanoate: step 2/4. Its function is as follows. Catalyzes the isomerization between 2-isopropylmalate and 3-isopropylmalate, via the formation of 2-isopropylmaleate. The polypeptide is 3-isopropylmalate dehydratase large subunit (Nitratidesulfovibrio vulgaris (strain ATCC 29579 / DSM 644 / CCUG 34227 / NCIMB 8303 / VKM B-1760 / Hildenborough) (Desulfovibrio vulgaris)).